Reading from the N-terminus, the 103-residue chain is UPF0145 protein RSKD131_1772 (103 aa).

The protein belongs to the UPF0145 family.

In Cereibacter sphaeroides (strain KD131 / KCTC 12085) (Rhodobacter sphaeroides), this protein is UPF0145 protein RSKD131_1772.